We begin with the raw amino-acid sequence, 331 residues long: Holliday junction branch migration complex subunit RuvB (331 aa).

Residues 1–186 form a large ATPase domain (RuvB-L) region; it reads MAKTMMQDRL…FGIVQRLEFY (186 aa). ATP is bound by residues Ile25, Arg26, Gly67, Lys70, Thr71, Thr72, 133-135, Arg176, Tyr186, and Arg223; that span reads EDF. A Mg(2+)-binding site is contributed by Thr71. A small ATPAse domain (RuvB-S) region spans residues 187–257; it reads NIADLTTIVS…IAGSALDMLA (71 aa). Residues 260–331 form a head domain (RuvB-H) region; it reads RRGLDHLDRR…LTQMAIDQML (72 aa). DNA-binding residues include Arg296, Arg315, and Arg320.

The protein belongs to the RuvB family. Homohexamer. Forms an RuvA(8)-RuvB(12)-Holliday junction (HJ) complex. HJ DNA is sandwiched between 2 RuvA tetramers; dsDNA enters through RuvA and exits via RuvB. An RuvB hexamer assembles on each DNA strand where it exits the tetramer. Each RuvB hexamer is contacted by two RuvA subunits (via domain III) on 2 adjacent RuvB subunits; this complex drives branch migration. In the full resolvosome a probable DNA-RuvA(4)-RuvB(12)-RuvC(2) complex forms which resolves the HJ.

It localises to the cytoplasm. The catalysed reaction is ATP + H2O = ADP + phosphate + H(+). Its function is as follows. The RuvA-RuvB-RuvC complex processes Holliday junction (HJ) DNA during genetic recombination and DNA repair, while the RuvA-RuvB complex plays an important role in the rescue of blocked DNA replication forks via replication fork reversal (RFR). RuvA specifically binds to HJ cruciform DNA, conferring on it an open structure. The RuvB hexamer acts as an ATP-dependent pump, pulling dsDNA into and through the RuvAB complex. RuvB forms 2 homohexamers on either side of HJ DNA bound by 1 or 2 RuvA tetramers; 4 subunits per hexamer contact DNA at a time. Coordinated motions by a converter formed by DNA-disengaged RuvB subunits stimulates ATP hydrolysis and nucleotide exchange. Immobilization of the converter enables RuvB to convert the ATP-contained energy into a lever motion, pulling 2 nucleotides of DNA out of the RuvA tetramer per ATP hydrolyzed, thus driving DNA branch migration. The RuvB motors rotate together with the DNA substrate, which together with the progressing nucleotide cycle form the mechanistic basis for DNA recombination by continuous HJ branch migration. Branch migration allows RuvC to scan DNA until it finds its consensus sequence, where it cleaves and resolves cruciform DNA. This is Holliday junction branch migration complex subunit RuvB from Psychrobacter cryohalolentis (strain ATCC BAA-1226 / DSM 17306 / VKM B-2378 / K5).